We begin with the raw amino-acid sequence, 31 residues long: Cytochrome b6-f complex subunit 6 (31 aa).

The chain crosses the membrane as a helical span at residues 4–26; sequence ITSYFGFLLAALTVTSALFIGLS.

It belongs to the PetL family. The 4 large subunits of the cytochrome b6-f complex are cytochrome b6, subunit IV (17 kDa polypeptide, PetD), cytochrome f and the Rieske protein, while the 4 small subunits are PetG, PetL, PetM and PetN. The complex functions as a dimer.

The protein resides in the plastid. It is found in the chloroplast thylakoid membrane. In terms of biological role, component of the cytochrome b6-f complex, which mediates electron transfer between photosystem II (PSII) and photosystem I (PSI), cyclic electron flow around PSI, and state transitions. PetL is important for photoautotrophic growth as well as for electron transfer efficiency and stability of the cytochrome b6-f complex. This chain is Cytochrome b6-f complex subunit 6, found in Daucus carota (Wild carrot).